Consider the following 758-residue polypeptide: 5-methyltetrahydropteroyltriglutamate--homocysteine methyltransferase (758 aa).

5-methyltetrahydropteroyltri-L-glutamate contacts are provided by residues 17-20 (RELK) and K117. Residues 434 to 436 (IGS) and E487 each bind L-homocysteine. L-methionine contacts are provided by residues 434-436 (IGS) and E487. Residues 518-519 (RC) and W564 each bind 5-methyltetrahydropteroyltri-L-glutamate. D602 is an L-homocysteine binding site. D602 contributes to the L-methionine binding site. E608 is a binding site for 5-methyltetrahydropteroyltri-L-glutamate. Zn(2+) contacts are provided by H644, C646, and E668. The Proton donor role is filled by H697. Zn(2+) is bound at residue C729.

This sequence belongs to the vitamin-B12 independent methionine synthase family. Zn(2+) serves as cofactor.

The enzyme catalyses 5-methyltetrahydropteroyltri-L-glutamate + L-homocysteine = tetrahydropteroyltri-L-glutamate + L-methionine. Its pathway is amino-acid biosynthesis; L-methionine biosynthesis via de novo pathway; L-methionine from L-homocysteine (MetE route): step 1/1. Catalyzes the transfer of a methyl group from 5-methyltetrahydrofolate to homocysteine resulting in methionine formation. The protein is 5-methyltetrahydropteroyltriglutamate--homocysteine methyltransferase of Yersinia enterocolitica serotype O:8 / biotype 1B (strain NCTC 13174 / 8081).